The primary structure comprises 254 residues: Nickel import ATP-binding protein NikD (254 aa).

In terms of domain architecture, ABC transporter spans 2-241 (PQQIELRDIA…PKHAVTRSLV (240 aa)). 36–43 (GGSGSGKS) provides a ligand contact to ATP.

Belongs to the ABC transporter superfamily. Nickel importer (TC 3.A.1.5.3) family. The complex is composed of two ATP-binding proteins (NikD and NikE), two transmembrane proteins (NikB and NikC) and a solute-binding protein (NikA).

The protein localises to the cell inner membrane. The enzyme catalyses Ni(2+)(out) + ATP + H2O = Ni(2+)(in) + ADP + phosphate + H(+). In terms of biological role, part of the ABC transporter complex NikABCDE involved in nickel import. Responsible for energy coupling to the transport system. In Shigella dysenteriae serotype 1 (strain Sd197), this protein is Nickel import ATP-binding protein NikD.